The sequence spans 215 residues: Adenylate kinase (215 aa).

An ATP-binding site is contributed by 10–15 (GAGKGT). Residues 30–59 (STGDMLRAAVKAGTELGLIAKSVMDSGGLV) are NMP. AMP-binding positions include Thr-31, Arg-36, 57 to 59 (GLV), 85 to 88 (GFPR), and Gln-92. Positions 122 to 159 (GRRVHEASGRVYHTVYNPPKVEGKDDVTGDDLVQRKDD) are LID. Residues Arg-123 and 132 to 133 (VY) contribute to the ATP site. Arg-156 and Arg-167 together coordinate AMP. Gly-201 lines the ATP pocket.

This sequence belongs to the adenylate kinase family. Monomer.

The protein resides in the cytoplasm. It carries out the reaction AMP + ATP = 2 ADP. It participates in purine metabolism; AMP biosynthesis via salvage pathway; AMP from ADP: step 1/1. In terms of biological role, catalyzes the reversible transfer of the terminal phosphate group between ATP and AMP. Plays an important role in cellular energy homeostasis and in adenine nucleotide metabolism. The polypeptide is Adenylate kinase (Pseudomonas fluorescens (strain SBW25)).